The sequence spans 221 residues: Probable transaldolase (221 aa).

The Schiff-base intermediate with substrate role is filled by Lys-83.

It belongs to the transaldolase family. Type 3B subfamily.

The protein resides in the cytoplasm. The enzyme catalyses D-sedoheptulose 7-phosphate + D-glyceraldehyde 3-phosphate = D-erythrose 4-phosphate + beta-D-fructose 6-phosphate. Its pathway is carbohydrate degradation; pentose phosphate pathway; D-glyceraldehyde 3-phosphate and beta-D-fructose 6-phosphate from D-ribose 5-phosphate and D-xylulose 5-phosphate (non-oxidative stage): step 2/3. Functionally, transaldolase is important for the balance of metabolites in the pentose-phosphate pathway. This is Probable transaldolase from Herpetosiphon aurantiacus (strain ATCC 23779 / DSM 785 / 114-95).